The chain runs to 230 residues: ATP-dependent dethiobiotin synthetase BioD (230 aa).

ATP is bound at residue 12–17; it reads DIGKTH. A Mg(2+)-binding site is contributed by T16. K37 is a catalytic residue. A substrate-binding site is contributed by S41. Residues D52, 115 to 118, and 175 to 176 contribute to the ATP site; these read EGAG and SE. The Mg(2+) site is built by D52 and E115.

This sequence belongs to the dethiobiotin synthetase family. Homodimer. It depends on Mg(2+) as a cofactor.

It localises to the cytoplasm. It carries out the reaction (7R,8S)-7,8-diammoniononanoate + CO2 + ATP = (4R,5S)-dethiobiotin + ADP + phosphate + 3 H(+). It functions in the pathway cofactor biosynthesis; biotin biosynthesis; biotin from 7,8-diaminononanoate: step 1/2. Functionally, catalyzes a mechanistically unusual reaction, the ATP-dependent insertion of CO2 between the N7 and N8 nitrogen atoms of 7,8-diaminopelargonic acid (DAPA, also called 7,8-diammoniononanoate) to form a ureido ring. The sequence is that of ATP-dependent dethiobiotin synthetase BioD from Caulobacter sp. (strain K31).